A 150-amino-acid polypeptide reads, in one-letter code: AN1-type zinc finger protein TMC1 (150 aa).

The interval 1-82 is disordered; it reads MSDINEIEIP…TKKTTKKKKK (82 aa). Ser2 is subject to N-acetylserine. The span at 23–33 shows a compositional bias: basic and acidic residues; that stretch reads DPMHEIEDKST. Phosphoserine occurs at positions 43 and 54. The span at 53 to 70 shows a compositional bias: low complexity; it reads NSRSSSNSSVTSTGQSSR. Positions 71–82 are enriched in basic residues; sequence RVTKKTTKKKKK. The segment at 79 to 128 adopts an AN1-type zinc-finger fold; the sequence is KKKKNACYFDTCSSAASKFIGDCNFCKGHFCSKHRLMENHACNGLTSCKE. Zn(2+) contacts are provided by Cys85, Cys90, Cys101, Cys104, Cys109, His112, His118, and Cys120.

It localises to the nucleus. In terms of biological role, may have a role in protecting cells from metalloid-induced proteotoxicity. The polypeptide is AN1-type zinc finger protein TMC1 (Saccharomyces cerevisiae (strain ATCC 204508 / S288c) (Baker's yeast)).